The sequence spans 674 residues: Phosphopantothenoylcysteine decarboxylase subunit VHS3 (674 aa).

5 disordered regions span residues 1–164, 190–230, 348–368, 384–426, and 575–674; these read MTNK…SILS, LNSD…RPSV, QHNSIDTSFNSTNSNAGNITG, TSSN…SNVV, and VSAG…LQRS. A compositionally biased stretch (polar residues) spans 15–81; it reads ASNTLSGAEQ…TSGAVVSNTP (67 aa). Threonine 90 carries the phosphothreonine modification. A compositionally biased stretch (polar residues) spans 106–116; that stretch reads EQTPPNQVARQ. Over residues 137–150 the composition is skewed to basic and acidic residues; sequence NLKDINTKVPKDGE. Polar residues predominate over residues 152-164; the sequence is SASSFSTPTSILS. The span at 198–212 shows a compositional bias: basic and acidic residues; that stretch reads SPRKEHPHFYVEDPL. Residues 214–230 show a composition bias toward low complexity; the sequence is TPSVRSRSNSTSPRPSV. Positions 351-368 are enriched in polar residues; sequence SIDTSFNSTNSNAGNITG. The segment covering 384–395 has biased composition (low complexity); the sequence is TSSNSAASQTNN. The span at 403–426 shows a compositional bias: polar residues; sequence MASTTGFPSTLGGSRTYSNSSNVV. Residues 580–591 are compositionally biased toward acidic residues; it reads EEEEDEDNDEED. Residues 592-602 are compositionally biased toward basic and acidic residues; sequence DNKKNDTGGKD. Residues 603–660 are compositionally biased toward acidic residues; it reads EDNDDDDDDDDDDDDDDDDDDDDDDDDDDDDDDDDDDDDDDDDDDDDDEDDEDEDEDD. The span at 661–674 shows a compositional bias: basic and acidic residues; it reads EGKKKEDKGGLQRS.

Belongs to the HFCD (homooligomeric flavin containing Cys decarboxylase) superfamily. In terms of assembly, interacts with the C-terminal domain of PPZ1. Component of the phosphopantothenoylcysteine decarboxylase (PPCDC) complex, a heterotrimer composed of CAB3, SIS2 and VHS3.

In terms of biological role, component of the phosphopantothenoylcysteine decarboxylase (PPCDC) involved in the coenzyme A synthesis. Acts as an inhibitory subunit of protein phosphatase PPZ1, which is involved in many cellular processes such as G1-S transition or salt tolerance. This is Phosphopantothenoylcysteine decarboxylase subunit VHS3 (VHS3) from Saccharomyces cerevisiae (strain ATCC 204508 / S288c) (Baker's yeast).